The chain runs to 553 residues: Arginine--tRNA ligase (553 aa).

Residues 132 to 140 (PTGDLHIGH) carry the 'HIGH' region motif.

The protein belongs to the class-I aminoacyl-tRNA synthetase family. Monomer.

The protein localises to the cytoplasm. The enzyme catalyses tRNA(Arg) + L-arginine + ATP = L-arginyl-tRNA(Arg) + AMP + diphosphate. In Staphylococcus aureus (strain N315), this protein is Arginine--tRNA ligase.